Consider the following 520-residue polypeptide: Transactivator/viroplasmin protein (520 aa).

Disordered regions lie at residues 103 to 126 (SDFL…SVAP) and 487 to 520 (EDAS…KQVD).

This sequence belongs to the caulimoviridae viroplasmin family.

It localises to the host cytoplasm. Its function is as follows. Enhances the ribosomal termination-reinitiation event leading to the translation of major open reading frames on the polycistronic viral RNAs. The polypeptide is Transactivator/viroplasmin protein (Arabidopsis thaliana (Mouse-ear cress)).